A 665-amino-acid chain; its full sequence is Succinate dehydrogenase [ubiquinone] flavoprotein subunit B, mitochondrial (665 aa).

A mitochondrion-targeting transit peptide spans 1–45; sequence MALLKVAPSRLLSRALQLTSTLQNCTATSIAARRNFHFTVYGRKD. FAD-binding residues include Ala72, Ala75, Thr94, Lys95, and Ser101. His102 carries the tele-8alpha-FAD histidine modification. The FAD site is built by Thr103, Gly108, Ala224, and Asp278. Oxaloacetate is bound by residues His299, Arg343, and His410. The Proton acceptor role is filled by Arg343. Glu443 serves as a coordination point for FAD. Oxaloacetate contacts are provided by Arg454 and Ala457. The FAD site is built by Ser459 and Leu460.

The protein belongs to the FAD-dependent oxidoreductase 2 family. FRD/SDH subfamily. In terms of assembly, component of complex II composed of four subunits: a flavoprotein (FP), an iron-sulfur protein (IP), and a cytochrome b composed of a large and a small subunit. It depends on FAD as a cofactor.

It localises to the mitochondrion inner membrane. It carries out the reaction a ubiquinone + succinate = a ubiquinol + fumarate. The enzyme catalyses (R)-malate + a quinone = enol-oxaloacetate + a quinol. It catalyses the reaction (S)-malate + a quinone = enol-oxaloacetate + a quinol. The protein operates within carbohydrate metabolism; tricarboxylic acid cycle; fumarate from succinate (eukaryal route): step 1/1. With respect to regulation, enol-oxaloacetate inhibits the succinate dehydrogenase activity. Flavoprotein (FP) subunit of succinate dehydrogenase (SDH) that is involved in complex II of the mitochondrial electron transport chain and is responsible for transferring electrons from succinate to ubiquinone (coenzyme Q). SDH also oxidizes malate to the non-canonical enol form of oxaloacetate, enol-oxaloacetate. Enol-oxaloacetate, which is a potent inhibitor of the succinate dehydrogenase activity, is further isomerized into keto-oxaloacetate. The sequence is that of Succinate dehydrogenase [ubiquinone] flavoprotein subunit B, mitochondrial (sdha-b) from Xenopus laevis (African clawed frog).